We begin with the raw amino-acid sequence, 499 residues long: Glutelin type-A 1 (499 aa).

Positions 1 to 24 (MASINRPIVFFTVCLFLLCNGSLA) are cleaved as a signal peptide. Cystine bridges form between C46–C79 and C122–C313. Cupin type-1 domains are found at residues 51-248 (LQAF…QVAR) and 319-468 (QNID…EEAQ).

It belongs to the 11S seed storage protein (globulins) family. In terms of assembly, hexamer; each subunit is composed of an acidic and a basic chain derived from a single precursor and linked by a disulfide bond.

In terms of biological role, seed storage protein. This chain is Glutelin type-A 1 (GLUA1), found in Oryza sativa subsp. japonica (Rice).